We begin with the raw amino-acid sequence, 277 residues long: Large ribosomal subunit protein uL2 (277 aa).

2 disordered regions span residues 36-58 (PLHK…GGGH) and 219-277 (TVRG…RKNK). Basic residues predominate over residues 258 to 277 (KTRKKKNKSDKFIVRRRKNK).

This sequence belongs to the universal ribosomal protein uL2 family. Part of the 50S ribosomal subunit. Forms a bridge to the 30S subunit in the 70S ribosome.

In terms of biological role, one of the primary rRNA binding proteins. Required for association of the 30S and 50S subunits to form the 70S ribosome, for tRNA binding and peptide bond formation. It has been suggested to have peptidyltransferase activity; this is somewhat controversial. Makes several contacts with the 16S rRNA in the 70S ribosome. This is Large ribosomal subunit protein uL2 from Bacillus velezensis (strain DSM 23117 / BGSC 10A6 / LMG 26770 / FZB42) (Bacillus amyloliquefaciens subsp. plantarum).